The following is a 928-amino-acid chain: G-protein coupled receptor family C group 6 member A (928 aa).

The N-terminal stretch at 1–20 is a signal peptide; the sequence is MALSFVFITCFMILLDTSQS. Residues 21 to 594 are Extracellular-facing; it reads CHTPDDFVAI…EYLDWDDSLA (574 aa). N-linked (GlcNAc...) asparagine glycans are attached at residues Asn332 and Asn555. A helical membrane pass occupies residues 595–615; that stretch reads LLLIALSLLGIAFVLAVGIIF. At 616–630 the chain is on the cytoplasmic side; that stretch reads TRNLKTPVVKSSGGL. A helical transmembrane segment spans residues 631-651; sequence VVCYVMLACHALNFASTGFFI. The Extracellular segment spans residues 652–669; sequence GEPQDFTCKTRQTLFGVS. A helical transmembrane segment spans residues 670 to 690; the sequence is FTLCVSCILTKSLKILLAFSF. Over 691–706 the chain is Cytoplasmic; sequence DPTLKTFLKCLYRPVP. Residues 707-727 form a helical membrane-spanning segment; the sequence is IVLTCTGIQVVICTLWLVLAA. The Extracellular portion of the chain corresponds to 728–750; it reads PTVEENTSLPRVIILECEEGSAL. A helical membrane pass occupies residues 751–771; it reads AFGTMLGYIAVLAFICFVFAF. At 772 to 784 the chain is on the cytoplasmic side; that stretch reads KGRKLPENYNEAK. The helical transmembrane segment at 785–805 threads the bilayer; the sequence is FLTFGMLIYFIAWITFIPVYA. At 806-812 the chain is on the extracellular side; it reads TTFGKYL. A helical membrane pass occupies residues 813 to 833; sequence PAVEIIVILISNYGILCCTFF. Over 834-928 the chain is Cytoplasmic; the sequence is PKCYIILCKQ…TLHQKRSSSI (95 aa).

The protein belongs to the G-protein coupled receptor 3 family. In terms of assembly, homodimer; disulfide-linked. In terms of processing, N-glycosylated. As to expression, high expression in soft palate. Weak expression in kidney, liver, lung and brain. No expression detected in heart, testis, skeletal muscle amd spleen.

It is found in the cell membrane. In terms of biological role, receptor activated by multiple ligands, including osteocalcin (BGLAP), basic amino acids, and various cations. Activated by amino acids with a preference for basic amino acids such as L-Lys, L-Arg and L-ornithine but also by small and polar amino acids. The L-alpha amino acids respond is augmented by divalent cations Ca(2+) and Mg(2+). Seems to act through a G(q)/G(11) and G(i)-coupled pathway. Regulates testosterone production by acting as a ligand for uncarboxylated osteocalcin hormone: osteocalcin-binding at the surface of Leydig cells initiates a signaling response that promotes the expression of enzymes required for testosterone synthesis in a CREB-dependent manner. Mediates the non-genomic effects of androgens in multiple tissue. May coordinate nutritional and hormonal anabolic signals through the sensing of extracellular amino acids, osteocalcin, divalent ions and its responsiveness to anabolic steroids. The polypeptide is G-protein coupled receptor family C group 6 member A (Gprc6a) (Rattus norvegicus (Rat)).